The sequence spans 257 residues: Diphthine synthase (257 aa).

S-adenosyl-L-methionine is bound by residues L9, D83, M86, 111 to 112, and I163; that span reads SI.

This sequence belongs to the diphthine synthase family. As to quaternary structure, homodimer.

The enzyme catalyses 2-[(3S)-amino-3-carboxypropyl]-L-histidyl-[translation elongation factor 2] + 3 S-adenosyl-L-methionine = diphthine-[translation elongation factor 2] + 3 S-adenosyl-L-homocysteine + 3 H(+). The protein operates within protein modification; peptidyl-diphthamide biosynthesis. Functionally, S-adenosyl-L-methionine-dependent methyltransferase that catalyzes the trimethylation of the amino group of the modified target histidine residue in translation elongation factor 2 (EF-2), to form an intermediate called diphthine. The three successive methylation reactions represent the second step of diphthamide biosynthesis. This Thermoplasma acidophilum (strain ATCC 25905 / DSM 1728 / JCM 9062 / NBRC 15155 / AMRC-C165) protein is Diphthine synthase.